Here is a 272-residue protein sequence, read N- to C-terminus: Methylsterol monooxygenase 2-1 (272 aa).

3 helical membrane-spanning segments follow: residues Ile-24–Leu-44, Leu-72–Met-94, and Val-107–His-127. A Fatty acid hydroxylase domain is found at Leu-113–Thr-259. The Histidine box-1 signature appears at His-127–His-131. The Histidine box-2 signature appears at His-140–His-144. 2 helical membrane passes run Ile-162–Thr-182 and Asn-209–Ala-229. The Histidine box-3 motif lies at Phe-231–Arg-237.

Belongs to the sterol desaturase family. It depends on Fe cation as a cofactor. Strongly expressed in leaves, flowers, siliques and developing seeds.

It is found in the endoplasmic reticulum membrane. It carries out the reaction 4,4-dimethyl-5alpha-cholest-7-en-3beta-ol + 6 Fe(II)-[cytochrome b5] + 3 O2 + 5 H(+) = 4alpha-carboxy-4beta-methyl-5alpha-cholest-7-ene-3beta-ol + 6 Fe(III)-[cytochrome b5] + 4 H2O. The enzyme catalyses 24-methylidenelophenol + 6 Fe(II)-[cytochrome b5] + 3 O2 + 5 H(+) = 4alpha-carboxy-ergosta-7,24(24(1))-dien-3beta-ol + 6 Fe(III)-[cytochrome b5] + 4 H2O. Functionally, non-heme iron oxygenase involved in sterols biosynthesis by catalyzing the removal of the second methyl group at the C-4 position. 24-ethylidenelophenol and 24-ethyllophenol are the preferred substrates. Together with SMO2-2, required during embryogenesis, probably by maintaining sterols and auxin homeostasis. The protein is Methylsterol monooxygenase 2-1 of Arabidopsis thaliana (Mouse-ear cress).